The sequence spans 147 residues: Protein KilB (147 aa).

The hydrophobic stretch occupies residues 1–20 (MVTTLIAVIGTLAGTGLAGL).

Functionally, involved in plasmid transfer. This Streptomyces lividans protein is Protein KilB (kilB).